Reading from the N-terminus, the 270-residue chain is Acyl-[acyl-carrier-protein]--UDP-N-acetylglucosamine O-acyltransferase (270 aa).

Residues 69–72 (QDLK), histidine 121, histidine 140, and glutamine 157 each bind substrate.

Belongs to the transferase hexapeptide repeat family. LpxA subfamily. In terms of assembly, homotrimer.

It localises to the cytoplasm. The enzyme catalyses a (3R)-hydroxyacyl-[ACP] + UDP-N-acetyl-alpha-D-glucosamine = a UDP-3-O-[(3R)-3-hydroxyacyl]-N-acetyl-alpha-D-glucosamine + holo-[ACP]. The protein operates within glycolipid biosynthesis; lipid IV(A) biosynthesis; lipid IV(A) from (3R)-3-hydroxytetradecanoyl-[acyl-carrier-protein] and UDP-N-acetyl-alpha-D-glucosamine: step 1/6. Its function is as follows. Involved in the biosynthesis of lipid A, a phosphorylated glycolipid that anchors the lipopolysaccharide to the outer membrane of the cell. The polypeptide is Acyl-[acyl-carrier-protein]--UDP-N-acetylglucosamine O-acyltransferase (Helicobacter pylori (strain ATCC 700392 / 26695) (Campylobacter pylori)).